A 634-amino-acid chain; its full sequence is DNA gyrase subunit B (634 aa).

The interval 1 to 220 (MSYDASAIRV…EEVFLDKGGV (220 aa)) is ATPase domain. The tract at residues 221 to 390 (ASFAKALAEG…EAARKARELV (170 aa)) is transducer domain. Residues 416–534 (AELFIVEGDS…RGHVYIAQPP (119 aa)) form the Toprim domain. Mg(2+) contacts are provided by glutamate 422, aspartate 499, and aspartate 501.

This sequence belongs to the type II topoisomerase GyrB family. Heterotetramer, composed of two GyrA and two GyrB chains. Non-hydrolyzable ATP analogs induce dimerization, novobiocin also induces a small amount of dimerization. The two subunits form an intertwined dimer where the GyrB ATPase transducer helix of 1 subunit connects to the Toprim domain of the other GyrB subunit through a 10 residue linker. In the heterotetramer, GyrA contains the active site tyrosine that forms a covalent intermediate with the DNA, while GyrB binds cofactors and catalyzes ATP hydrolysis. Requires Mg(2+) as cofactor. Mn(2+) serves as cofactor. It depends on Ca(2+) as a cofactor.

Its subcellular location is the cytoplasm. It catalyses the reaction ATP-dependent breakage, passage and rejoining of double-stranded DNA.. In terms of biological role, a type II topoisomerase that negatively supercoils closed circular double-stranded (ds) DNA in an ATP-dependent manner. It probably also catalyzes the interconversion of other topological isomers of double-stranded DNA rings, including catenanes. Relaxes negatively supercoiled DNA in an ATP-independent manner. At comparable concentrations T.thermophilus gyrase does not introduce as many negative supercoils into DNA as the E.coli enzyme. Functionally, negative supercoiling favors strand separation, and DNA replication, transcription, recombination and repair, all of which involve strand separation. Type II topoisomerases break and join 2 DNA strands simultaneously in an ATP-dependent manner. This is DNA gyrase subunit B from Thermus thermophilus (strain ATCC 27634 / DSM 579 / HB8).